Reading from the N-terminus, the 324-residue chain is Olfactory receptor 6K2 (324 aa).

The Extracellular segment spans residues M1 to V25. A glycan (N-linked (GlcNAc...) asparagine) is linked at N5. The helical transmembrane segment at V26–I46 threads the bilayer. Residues T47 to H54 are Cytoplasmic-facing. Residues L55–T75 form a helical membrane-spanning segment. Topologically, residues A76–L98 are extracellular. C96 and C188 are joined by a disulfide. Residues Q99–F119 traverse the membrane as a helical segment. Residues D120 to K138 lie on the Cytoplasmic side of the membrane. The chain crosses the membrane as a helical span at residues L139–I159. The Extracellular portion of the chain corresponds to A160–Q198. Residues V199 to S218 form a helical membrane-spanning segment. Residues Y219 to A238 are Cytoplasmic-facing. The chain crosses the membrane as a helical span at residues F239–M259. Topologically, residues Y260–D272 are extracellular. Residues I273–L293 traverse the membrane as a helical segment. Residues R294–F324 lie on the Cytoplasmic side of the membrane.

The protein belongs to the G-protein coupled receptor 1 family.

The protein localises to the cell membrane. Odorant receptor. This Homo sapiens (Human) protein is Olfactory receptor 6K2 (OR6K2).